The sequence spans 414 residues: Probable peptidoglycan glycosyltransferase FtsW (414 aa).

The Cytoplasmic portion of the chain corresponds to Met-1–Arg-12. The helical transmembrane segment at Leu-13–Ser-33 threads the bilayer. The Periplasmic portion of the chain corresponds to Arg-34–Thr-47. Residues Leu-48–Met-68 traverse the membrane as a helical segment. Residues Pro-69–Gly-86 lie on the Cytoplasmic side of the membrane. A helical transmembrane segment spans residues Val-87–Trp-107. Residues Gln-108–Ser-111 are Periplasmic-facing. A helical membrane pass occupies residues Ala-112–Val-132. The Cytoplasmic portion of the chain corresponds to Lys-133–Asn-174. Residues Leu-175–Ala-194 form a helical membrane-spanning segment. At Gln-195–Asp-197 the chain is on the periplasmic side. The helical transmembrane segment at Leu-198–Ala-217 threads the bilayer. Lys-218 is a topological domain (cytoplasmic). The helical transmembrane segment at Leu-219–Ala-239 threads the bilayer. Residues Glu-240–Ala-301 are Periplasmic-facing. The chain crosses the membrane as a helical span at residues Ile-302–Val-322. Residues Ala-323–Gly-342 are Cytoplasmic-facing. The helical transmembrane segment at Phe-343–Ala-363 threads the bilayer. Topologically, residues Ala-364–Thr-373 are periplasmic. A helical membrane pass occupies residues Leu-374 to Leu-394. Topologically, residues Leu-395–Arg-414 are cytoplasmic.

It belongs to the SEDS family. FtsW subfamily.

It is found in the cell inner membrane. It carries out the reaction [GlcNAc-(1-&gt;4)-Mur2Ac(oyl-L-Ala-gamma-D-Glu-L-Lys-D-Ala-D-Ala)](n)-di-trans,octa-cis-undecaprenyl diphosphate + beta-D-GlcNAc-(1-&gt;4)-Mur2Ac(oyl-L-Ala-gamma-D-Glu-L-Lys-D-Ala-D-Ala)-di-trans,octa-cis-undecaprenyl diphosphate = [GlcNAc-(1-&gt;4)-Mur2Ac(oyl-L-Ala-gamma-D-Glu-L-Lys-D-Ala-D-Ala)](n+1)-di-trans,octa-cis-undecaprenyl diphosphate + di-trans,octa-cis-undecaprenyl diphosphate + H(+). The protein operates within cell wall biogenesis; peptidoglycan biosynthesis. Peptidoglycan polymerase that is essential for cell division. The chain is Probable peptidoglycan glycosyltransferase FtsW from Escherichia coli O157:H7.